The chain runs to 363 residues: Teichoic acids export ATP-binding protein TagH (363 aa).

Residues Lys-27–Ala-246 form the ABC transporter domain. Gly-60–Ser-67 provides a ligand contact to ATP. Residues Gln-247 to Lys-363 form a unknown region.

Belongs to the ABC transporter superfamily. Teichoic acids exporter (TC 3.A.1.104.1) family. The complex is composed of two ATP-binding proteins (TagH) and two transmembrane proteins (TagG).

It is found in the cell membrane. It carries out the reaction ATP + H2O + teichoic acidSide 1 = ADP + phosphate + teichoic acidSide 2.. Its function is as follows. Part of the ABC transporter complex TagGH involved in teichoic acids export. Responsible for energy coupling to the transport system. In Lactiplantibacillus plantarum (strain ATCC BAA-793 / NCIMB 8826 / WCFS1) (Lactobacillus plantarum), this protein is Teichoic acids export ATP-binding protein TagH.